We begin with the raw amino-acid sequence, 225 residues long: uncharacterized protein (225 aa).

Residues 181-203 (INIFVVFMFIIYLLFYIISSTVF) form a helical membrane-spanning segment.

It is found in the cell membrane. This is an uncharacterized protein from Bacillus anthracis.